A 466-amino-acid polypeptide reads, in one-letter code: Replicative helicase loading/DNA remodeling protein DnaB (466 aa).

The tract at residues 3–113 is DDBH1; it reads RQAFEFGLRP…ETQFVYQLIQ (111 aa). Residues 200 to 292 form a DDBH2-1 region; the sequence is EMLRQMLGKH…TSSSAGKSSE (93 aa). The interval 293–401 is DDBH2-2; sequence VNPKPQSDEW…QPKNEGSSGN (109 aa).

It belongs to the DnaB/DnaD family. Homotetramer, higher-order oligomers are induced by ssDNA. The DNA replisome assembles sequentially on oriC in this order; DnaA, DnaD, DnaB, DnaI-DnaC helicase. Part of the replication restart primosome, PriA binds first, then DnaD and subsequently DnaB bind.

In terms of biological role, helps DnaI load the DnaC replicative helicase onto single-stranded (ss)DNA. During DNA replication from the origin of replication (oriC) in the DNA replisome, DnaB and DnaD are required after DnaA and before subsequent helicase DnaC loading. Component of the replication restart primosome, which reloads the replicative helicase on sites other than oriC. Essential for replication initiation of the chromosome and plasmids. Remodels DNA, laterally compacts supercoiled plasmid and linear DNA. Binds supercoiled, nicked and linear double-stranded (ds)DNA and phage phiX174 single-stranded (ss)DNA; phiX174 ssDNA is a better substrate than for B.subtilis. No binding to phage M13 ssDNA although it induces oligomers. The polypeptide is Replicative helicase loading/DNA remodeling protein DnaB (Staphylococcus aureus (strain NCTC 8325 / PS 47)).